A 149-amino-acid chain; its full sequence is Large ribosomal subunit protein uL13 (149 aa).

Belongs to the universal ribosomal protein uL13 family. As to quaternary structure, part of the 50S ribosomal subunit.

This protein is one of the early assembly proteins of the 50S ribosomal subunit, although it is not seen to bind rRNA by itself. It is important during the early stages of 50S assembly. The polypeptide is Large ribosomal subunit protein uL13 (Bifidobacterium adolescentis (strain ATCC 15703 / DSM 20083 / NCTC 11814 / E194a)).